A 135-amino-acid polypeptide reads, in one-letter code: Cytochrome c2 (135 aa).

The signal sequence occupies residues 1–23 (MKKGFLAAGVFAAVAFASGAALA). Residues Cys-37, Cys-40, His-41, and Met-114 each coordinate heme c.

The protein belongs to the cytochrome c family. In terms of processing, binds 1 heme c group covalently per subunit.

Its function is as follows. Cytochrome c2 is found mainly in purple, non-sulfur, photosynthetic bacteria where it functions as the electron donor to the oxidized bacteriochlorophyll in the photophosphorylation pathway. However, it may also have a role in the respiratory chain and is found in some non-photosynthetic bacteria. In Rhodospirillum rubrum (strain ATCC 11170 / ATH 1.1.1 / DSM 467 / LMG 4362 / NCIMB 8255 / S1), this protein is Cytochrome c2 (cycA).